Reading from the N-terminus, the 198-residue chain is Recombination protein RecR (198 aa).

The C4-type zinc finger occupies 57–72; the sequence is CRQCRTLSEEELCPQC. Residues 80-174 enclose the Toprim domain; it reads SLLCVVEGPL…TLSRIAHGVP (95 aa).

Belongs to the RecR family.

Functionally, may play a role in DNA repair. It seems to be involved in an RecBC-independent recombinational process of DNA repair. It may act with RecF and RecO. This Pseudomonas aeruginosa (strain LESB58) protein is Recombination protein RecR.